The following is a 545-amino-acid chain: Heparanase (545 aa).

Residues 1 to 37 (MLACRKPGLRPPLLLLLPLLGPLGPCSPGTPAAAAPA) form the signal peptide. Residue 64 to 66 (DAN) coordinates heparan sulfate group. Residues 112–159 (PAFEERSYWLSQSNQDICKSGSIPSDVEEKLRLEWPFQEQVLLREQYQ) constitute a propeptide, linker peptide. Cys-129 and Cys-181 are disulfide-bonded. 160–164 (KKFTN) is a heparan sulfate group binding site. Asn-164 and Asn-219 each carry an N-linked (GlcNAc...) asparagine glycan. Glu-227 acts as the Proton donor in catalysis. Heparan sulfate group is bound by residues 272–282 (QPRRNTVKMLK), His-298, and Arg-305. Residues 290–419 (EVIDSVTWHH…LLFKKLVGNK (130 aa)) are required for heterodimerization with the heparanase 8 kDa subunit. The Nucleophile role is filled by Glu-345. Heparan sulfate group-binding positions include 350-352 (FGG) and 391-393 (GNY). A disulfide bridge links Cys-439 with Cys-544. Asn-461 is a glycosylation site (N-linked (GlcNAc...) asparagine). Residues 529–545 (FSYGFFVIRNAKVAACI) form a required for transferring proheparanase to the Golgi apparatus, secretion and subsequent enzyme activity and for enhancement of PKB/AKT1 phosphorylation region.

It belongs to the glycosyl hydrolase 79 family. In terms of assembly, heterodimer; heterodimer formation between the 8 kDa and the 50 kDa subunits is required for enzyme activity. Interacts with TF; the interaction, inhibited by heparin, enhances the generation of activated factor X and activates coagulation. Interacts with HRG; the interaction is enhanced at acidic pH, partially inhibits binding of HPSE to cell surface receptors and modulates its enzymatic activity. Interacts with SDC1; the interaction enhances the shedding of SDC1. Interacts with HPSE2. In terms of processing, proteolytically processed. The cleavage of the 65 kDa form leads to the generation of a linker peptide, and the 8 kDa and the 50 kDa products. The active form, the 8/50 kDa heterodimer, is resistant to degradation. Complete removal of the linker peptide appears to be a prerequisite to the complete activation of the enzyme. Post-translationally, N-glycosylated. Glycosylation of the 50 kDa subunit appears to be essential for its solubility. Highly expressed in placenta and weakly in the kidney, lung, spleen and uterus.

It is found in the lysosome membrane. It localises to the secreted. The protein resides in the nucleus. The catalysed reaction is endohydrolysis of (1-&gt;4)-beta-D-glycosidic bonds of heparan sulfate chains in heparan sulfate proteoglycan.. Inhibited by laminarin sulfate and, to a lower extent, by heparin, sulfamin and EDTA. Activated by calcium and magnesium. Functionally, endoglycosidase that cleaves heparan sulfate proteoglycans (HSPGs) into heparan sulfate side chains and core proteoglycans. Participates in extracellular matrix (ECM) degradation and remodeling. Selectively cleaves the linkage between a glucuronic acid unit and an N-sulfo glucosamine unit carrying either a 3-O-sulfo or a 6-O-sulfo group. Can also cleave the linkage between a glucuronic acid unit and an N-sulfo glucosamine unit carrying a 2-O-sulfo group, but not linkages between a glucuronic acid unit and a 2-O-sulfated iduronic acid moiety. Essentially inactive at neutral pH but becomes active under acidic conditions such as during tumor invasion and in inflammatory processes. Facilitates cell migration associated with metastasis, wound healing and inflammation. Enhances shedding of syndecans. Acts as a procoagulant by enhancing the generation of activated factor X/F10 in the presence of tissue factor/TF and activated factor VII/F7. Independent of its enzymatic activity, increases cell adhesion to the extracellular matrix (ECM). Enhances AKT1/PKB phosphorylation, possibly via interaction with a lipid raft-resident receptor. Plays a role in the regulation of osteogenesis. Enhances angiogenesis through up-regulation of SRC-mediated activation of VEGF. Implicated in hair follicle inner root sheath differentiation and hair homeostasis. The protein is Heparanase (HPSE) of Bos taurus (Bovine).